We begin with the raw amino-acid sequence, 92 residues long: Small ribosomal subunit protein uS19c (92 aa).

Belongs to the universal ribosomal protein uS19 family.

The protein localises to the plastid. Its subcellular location is the chloroplast. Functionally, protein S19 forms a complex with S13 that binds strongly to the 16S ribosomal RNA. In Chlorokybus atmophyticus (Soil alga), this protein is Small ribosomal subunit protein uS19c.